Here is a 316-residue protein sequence, read N- to C-terminus: Adenine deaminase (316 aa).

Residues histidine 14, histidine 16, and histidine 194 each contribute to the Zn(2+) site. Glutamate 197 acts as the Proton donor in catalysis. Aspartate 275 contributes to the Zn(2+) binding site. Aspartate 276 contributes to the substrate binding site.

The protein belongs to the metallo-dependent hydrolases superfamily. Adenosine and AMP deaminases family. Adenine deaminase type 2 subfamily. The cofactor is Zn(2+).

It carries out the reaction adenine + H2O + H(+) = hypoxanthine + NH4(+). Catalyzes the hydrolytic deamination of adenine to hypoxanthine. Plays an important role in the purine salvage pathway and in nitrogen catabolism. The chain is Adenine deaminase from Pseudomonas paraeruginosa (strain DSM 24068 / PA7) (Pseudomonas aeruginosa (strain PA7)).